The chain runs to 249 residues: MSKFEVTHLNLFYGENHALKDISIDIPARQVTALIGPSGCGKSSLLRTLNRMNDLVEGVKITGTVTFDGDDIYANIDVKHLRMSVGMVFQKPNPFPMSIYENIAFGLKAQGVKDKAVLDAVVENSLRGAALWEEVKTRLHTPAFGLSGGQQQRLCIARAIAMEPEVILMDEPTSALDPIATHKIEELMDELRKKFTIVIVTHSMNQAKRISDKTAFFWMGELVEHGDTEQIFNNPKDHRTQGYVSGHFG.

The ABC transporter domain maps to 4 to 244 (FEVTHLNLFY…PKDHRTQGYV (241 aa)). 36-43 (GPSGCGKS) contributes to the ATP binding site.

The protein belongs to the ABC transporter superfamily. Phosphate importer (TC 3.A.1.7) family. In terms of assembly, the complex is composed of two ATP-binding proteins (PstB), two transmembrane proteins (PstC and PstA) and a solute-binding protein (PstS).

The protein resides in the cell inner membrane. It carries out the reaction phosphate(out) + ATP + H2O = ADP + 2 phosphate(in) + H(+). Functionally, part of the ABC transporter complex PstSACB involved in phosphate import. Responsible for energy coupling to the transport system. The protein is Phosphate import ATP-binding protein PstB 2 of Shewanella oneidensis (strain ATCC 700550 / JCM 31522 / CIP 106686 / LMG 19005 / NCIMB 14063 / MR-1).